The following is a 61-amino-acid chain: Translational regulator CsrA (61 aa).

The protein belongs to the CsrA/RsmA family. Homodimer; the beta-strands of each monomer intercalate to form a hydrophobic core, while the alpha-helices form wings that extend away from the core.

It is found in the cytoplasm. Functionally, a key translational regulator that binds mRNA to regulate translation initiation and/or mRNA stability. Mediates global changes in gene expression, shifting from rapid growth to stress survival by linking envelope stress, the stringent response and the catabolite repression systems. Usually binds in the 5'-UTR; binding at or near the Shine-Dalgarno sequence prevents ribosome-binding, repressing translation, binding elsewhere in the 5'-UTR can activate translation and/or stabilize the mRNA. Its function is antagonized by small RNA(s). This chain is Translational regulator CsrA, found in Mannheimia succiniciproducens (strain KCTC 0769BP / MBEL55E).